We begin with the raw amino-acid sequence, 382 residues long: Dual-specificity RNA methyltransferase RlmN (382 aa).

The active-site Proton acceptor is the glutamate 96. Residues 102–342 (QGKRGTLCVS…VRTTRGEDID (241 aa)) enclose the Radical SAM core domain. Cysteine 109 and cysteine 345 are disulfide-bonded. The [4Fe-4S] cluster site is built by cysteine 116, cysteine 120, and cysteine 123. Residues 170–171 (GE), serine 202, 224–226 (SLH), and asparagine 302 each bind S-adenosyl-L-methionine. Cysteine 345 acts as the S-methylcysteine intermediate in catalysis.

It belongs to the radical SAM superfamily. RlmN family. [4Fe-4S] cluster serves as cofactor.

It is found in the cytoplasm. It carries out the reaction adenosine(2503) in 23S rRNA + 2 reduced [2Fe-2S]-[ferredoxin] + 2 S-adenosyl-L-methionine = 2-methyladenosine(2503) in 23S rRNA + 5'-deoxyadenosine + L-methionine + 2 oxidized [2Fe-2S]-[ferredoxin] + S-adenosyl-L-homocysteine. The enzyme catalyses adenosine(37) in tRNA + 2 reduced [2Fe-2S]-[ferredoxin] + 2 S-adenosyl-L-methionine = 2-methyladenosine(37) in tRNA + 5'-deoxyadenosine + L-methionine + 2 oxidized [2Fe-2S]-[ferredoxin] + S-adenosyl-L-homocysteine. In terms of biological role, specifically methylates position 2 of adenine 2503 in 23S rRNA and position 2 of adenine 37 in tRNAs. m2A2503 modification seems to play a crucial role in the proofreading step occurring at the peptidyl transferase center and thus would serve to optimize ribosomal fidelity. This is Dual-specificity RNA methyltransferase RlmN from Pseudomonas fluorescens (strain ATCC BAA-477 / NRRL B-23932 / Pf-5).